Reading from the N-terminus, the 674-residue chain is Protein asunder (674 aa).

Residues 516–538 (HKAKDQYRLLYRELEQLIQLNAS) adopt a coiled-coil conformation. Residues 560–579 (PSKSEAGTANLRSFTESPLS) are disordered. Residues 564-577 (EAGTANLRSFTESP) show a composition bias toward polar residues. The short motif at 601–607 (LKASKRR) is the Nuclear localization signal (NLS) element.

It belongs to the Integrator subunit 13 family. Belongs to the multiprotein complex Integrator, at least composed of IntS1, IntS2, IntS3, IntS4, omd/IntS5, IntS6, defl/IntS7, IntS8, IntS9, IntS10, IntS11, IntS12, asun/IntS13, IntS14 and IntS15. The core complex associates with protein phosphatase 2A subunits mts/PP2A and Pp2A-29B, to form the Integrator-PP2A (INTAC) complex. Post-translationally, phosphorylated.

The protein localises to the nucleus. It is found in the cytoplasm. Its subcellular location is the perinuclear region. Component of the integrator complex, a multiprotein complex that terminates RNA polymerase II (Pol II) transcription in the promoter-proximal region of genes. The integrator complex provides a quality checkpoint during transcription elongation by driving premature transcription termination of transcripts that are unfavorably configured for transcriptional elongation: the complex terminates transcription by (1) catalyzing dephosphorylation of the C-terminal domain (CTD) of Pol II subunit Polr2A/Rbp1 and Spt5, and (2) degrading the exiting nascent RNA transcript via endonuclease activity. The integrator complex is also involved in the 3'-end processing of the U7 snRNA, and also the spliceosomal snRNAs U1, U2, U4 and U5. In Drosophila pseudoobscura pseudoobscura (Fruit fly), this protein is Protein asunder (asun).